Here is a 106-residue protein sequence, read N- to C-terminus: Urease subunit beta (106 aa).

Belongs to the urease beta subunit family. As to quaternary structure, heterotrimer of UreA (gamma), UreB (beta) and UreC (alpha) subunits. Three heterotrimers associate to form the active enzyme.

The protein localises to the cytoplasm. The catalysed reaction is urea + 2 H2O + H(+) = hydrogencarbonate + 2 NH4(+). It participates in nitrogen metabolism; urea degradation; CO(2) and NH(3) from urea (urease route): step 1/1. In Escherichia coli O157:H7, this protein is Urease subunit beta.